Consider the following 429-residue polypeptide: Enolase (429 aa).

Glutamine 168 provides a ligand contact to (2R)-2-phosphoglycerate. Glutamate 210 functions as the Proton donor in the catalytic mechanism. The Mg(2+) site is built by aspartate 247, glutamate 288, and aspartate 315. Positions 340, 369, 370, and 391 each coordinate (2R)-2-phosphoglycerate. The active-site Proton acceptor is lysine 340.

It belongs to the enolase family. Mg(2+) serves as cofactor.

It is found in the cytoplasm. The protein resides in the secreted. It localises to the cell surface. The catalysed reaction is (2R)-2-phosphoglycerate = phosphoenolpyruvate + H2O. Its pathway is carbohydrate degradation; glycolysis; pyruvate from D-glyceraldehyde 3-phosphate: step 4/5. Catalyzes the reversible conversion of 2-phosphoglycerate (2-PG) into phosphoenolpyruvate (PEP). It is essential for the degradation of carbohydrates via glycolysis. The chain is Enolase from Nostoc punctiforme (strain ATCC 29133 / PCC 73102).